The primary structure comprises 271 residues: MASEFKKKLFWRAVVAEFLAMILFIFISIGSALGFHYPIKSNQTTGAVQDNVKVSLAFGLSIATLAQSVGHISGAHLNPAVTLGLLLSCQISVLRAIMYIIAQCVGAIVATAILSGITSSLPDNSLGLNALAPGVNSGQGLGIEIIGTLQLVLCVLATTDRRRRDLGGSGPLAIGFSVALGHLLAIDYTGCGINPARSFGSSVITHNFQDHWIFWVGPFIGAALAVLIYDFILAPRSSDLTDRVKVWTSGQVEEYDLDADDINSRVEMKPK.

At 1–11 the chain is on the cytoplasmic side; sequence MASEFKKKLFW. A helical transmembrane segment spans residues 12 to 29; the sequence is RAVVAEFLAMILFIFISI. The Extracellular portion of the chain corresponds to 30 to 48; that stretch reads GSALGFHYPIKSNQTTGAV. N-linked (GlcNAc...) asparagine glycosylation is present at asparagine 42. The helical transmembrane segment at 49–67 threads the bilayer; that stretch reads QDNVKVSLAFGLSIATLAQ. Topologically, residues 68-70 are cytoplasmic; sequence SVG. The stretch at 71–84 is an intramembrane region; it reads HISGAHLNPAVTLG. Residues 78–80 carry the NPA 1 motif; it reads NPA. At 85-92 the chain is on the cytoplasmic side; sequence LLLSCQIS. The chain crosses the membrane as a helical span at residues 93–111; that stretch reads VLRAIMYIIAQCVGAIVAT. The Extracellular segment spans residues 112–135; that stretch reads AILSGITSSLPDNSLGLNALAPGV. The chain crosses the membrane as a helical span at residues 136–155; the sequence is NSGQGLGIEIIGTLQLVLCV. Over 156–165 the chain is Cytoplasmic; the sequence is LATTDRRRRD. The chain crosses the membrane as a helical span at residues 166–183; sequence LGGSGPLAIGFSVALGHL. At 184–188 the chain is on the extracellular side; that stretch reads LAIDY. An intramembrane segment occupies 189-201; sequence TGCGINPARSFGS. Positions 194-196 match the NPA 2 motif; that stretch reads NPA. The Extracellular segment spans residues 202-208; that stretch reads SVITHNF. Residues 209 to 226 traverse the membrane as a helical segment; that stretch reads QDHWIFWVGPFIGAALAV. At 227–271 the chain is on the cytoplasmic side; sequence LIYDFILAPRSSDLTDRVKVWTSGQVEEYDLDADDINSRVEMKPK. At serine 249 the chain carries Phosphoserine. A Phosphotyrosine modification is found at tyrosine 255. Residue serine 264 is modified to Phosphoserine.

Belongs to the MIP/aquaporin (TC 1.A.8) family. In terms of assembly, homotetramer; each monomer provides an independent water pore. Component of the ankyrin-1 complex in the erythrocyte, composed of ANK1, RHCE, RHAG, SLC4A1, EPB42, GYPA, GYPB and AQP1. Interacts with EPHB2; involved in endolymph production in the inner ear. Identified in a complex with STOM. Interacts (via the N-terminal) with ANK1 (via ANK 1-5 repeats). Interacts (via the C-terminal) with EPB42.

The protein resides in the cell membrane. It catalyses the reaction H2O(in) = H2O(out). The catalysed reaction is nitric oxide(out) = nitric oxide(in). The enzyme catalyses CO2(out) = CO2(in). It carries out the reaction glycerol(in) = glycerol(out). It catalyses the reaction H2O2(out) = H2O2(in). The catalysed reaction is K(+)(in) = K(+)(out). The enzyme catalyses Na(+)(in) = Na(+)(out). Forms a water channel that facilitates the transport of water across cell membranes, playing a crucial role in water homeostasis in various tissues. Could also be permeable to small solutes including hydrogen peroxide, glycerol and gases such as amonnia (NH3), nitric oxide (NO) and carbon dioxide (CO2). Recruited to the ankyrin-1 complex, a multiprotein complex of the erythrocyte membrane, it could be part of a CO2 metabolon, linking facilitated diffusion of CO2 across the membrane, anion exchange of Cl(-)/HCO3(-) and interconversion of dissolved CO2 and carbonic acid in the cytosol. In vitro, it shows non-selective gated cation channel activity and may be permeable to cations like K(+) and Na(+) in vivo. The polypeptide is Aquaporin-1 (Bos taurus (Bovine)).